A 662-amino-acid chain; its full sequence is UvrABC system protein B (662 aa).

Residues 31-188 (DNIEGGEKAQ…NDLVDIQFER (158 aa)) enclose the Helicase ATP-binding domain. 44–51 (GATGTGKT) contributes to the ATP binding site. A Beta-hairpin motif is present at residues 97 to 120 (YYDYYQPEAYVPSSDTYIEKDSSV). The Helicase C-terminal domain occupies 435–601 (QIDDLLGEIN…TIKKEIRDLI (167 aa)). Residues 626 to 661 (KELVKKLEKQMQEAVEVLDFELAAQIRDMMLEVKAL) enclose the UVR domain.

The protein belongs to the UvrB family. Forms a heterotetramer with UvrA during the search for lesions. Interacts with UvrC in an incision complex.

It localises to the cytoplasm. Functionally, the UvrABC repair system catalyzes the recognition and processing of DNA lesions. A damage recognition complex composed of 2 UvrA and 2 UvrB subunits scans DNA for abnormalities. Upon binding of the UvrA(2)B(2) complex to a putative damaged site, the DNA wraps around one UvrB monomer. DNA wrap is dependent on ATP binding by UvrB and probably causes local melting of the DNA helix, facilitating insertion of UvrB beta-hairpin between the DNA strands. Then UvrB probes one DNA strand for the presence of a lesion. If a lesion is found the UvrA subunits dissociate and the UvrB-DNA preincision complex is formed. This complex is subsequently bound by UvrC and the second UvrB is released. If no lesion is found, the DNA wraps around the other UvrB subunit that will check the other stand for damage. The polypeptide is UvrABC system protein B (Streptococcus pneumoniae (strain ATCC 700669 / Spain 23F-1)).